Consider the following 300-residue polypeptide: uncharacterized protein (300 aa).

Residues 230–251 (LRQSTSRQSISRQSISRQSTSR) are disordered. Residues 231-251 (RQSTSRQSISRQSISRQSTSR) show a composition bias toward low complexity.

This is an uncharacterized protein from Acanthamoeba polyphaga (Amoeba).